We begin with the raw amino-acid sequence, 376 residues long: Gibberellin 20 oxidase 4 (376 aa).

Residues 222 to 322 (DNESIFRLNY…RKTLAFFLCP (101 aa)) form the Fe2OG dioxygenase domain. 3 residues coordinate Fe cation: H247, D249, and H303. R313 is an active-site residue.

It belongs to the iron/ascorbate-dependent oxidoreductase family. GA20OX subfamily. Fe(2+) serves as cofactor. It depends on L-ascorbate as a cofactor. As to expression, expressed in roots. Detected in leaves, inflorescences and siliques, but not in stems and dry seeds.

The catalysed reaction is gibberellin A12 + 2 2-oxoglutarate + 3 O2 + H(+) = gibberellin A9 + 2 succinate + 3 CO2 + 2 H2O. It catalyses the reaction gibberellin A53 + 2 2-oxoglutarate + 3 O2 + H(+) = gibberellin A20 + 2 succinate + 3 CO2 + 2 H2O. It participates in plant hormone biosynthesis; gibberellin biosynthesis. Key oxidase enzyme in the biosynthesis of gibberellin that catalyzes the conversion of GA12 and GA53 to GA9 and GA20 respectively, via a three-step oxidation at C-20 of the GA skeleton. This Arabidopsis thaliana (Mouse-ear cress) protein is Gibberellin 20 oxidase 4 (GA20OX4).